A 464-amino-acid chain; its full sequence is MAYYSTVLKRKVRKMLAVHFIAIGGIGMSGLARILQSKGYRVSGSDLKETELTKKLRAEGITVFIGHREENLASDVSLVVVSTAVSQDNPELLKAKRLGIPVMHRGELLARLMQEKKGIAVAGTHGKTTTSSMIAYVLEKEGFDPVIAVGGEIVDLGYNAKAGQGEYMVAEADESDGSFLKLLPYAAVITNIEADHLDYYQSFEEIKKAFKKFADNIRPEGFGVFCWDNLQVREMLKGYKKRKFTYGFSPGSDFMLRDYREEQNQLVANIYYKNTLEGELRLKVPGKHNILNAAAATAVLRNIGLSFKAISERLLEFNGAKRRFQILGERNGALIVDDYAHHPTEVEATLRAAKLYKDRDVLVVFQPHRYTRTHFFYKEFARVLVDAEKVVLTGIYSAGEKPIPGVSGEMIAEEMKKLGKNPLYLESLDEVYNYLEQNLKPGLLVLLLGAGNINQVGYKLLGKA.

Residue 123-129 coordinates ATP; sequence GTHGKTT.

The protein belongs to the MurCDEF family.

The protein localises to the cytoplasm. It carries out the reaction UDP-N-acetyl-alpha-D-muramate + L-alanine + ATP = UDP-N-acetyl-alpha-D-muramoyl-L-alanine + ADP + phosphate + H(+). The protein operates within cell wall biogenesis; peptidoglycan biosynthesis. In terms of biological role, cell wall formation. The chain is UDP-N-acetylmuramate--L-alanine ligase from Carboxydothermus hydrogenoformans (strain ATCC BAA-161 / DSM 6008 / Z-2901).